A 269-amino-acid chain; its full sequence is Shikimate dehydrogenase (NADP(+)) (269 aa).

Shikimate contacts are provided by residues serine 17 to serine 19 and threonine 64. Catalysis depends on lysine 68, which acts as the Proton acceptor. Residue glutamate 80 participates in NADP(+) binding. Shikimate is bound by residues asparagine 89 and aspartate 105. Residues glycine 130–alanine 134, asparagine 154–lysine 159, and methionine 213 each bind NADP(+). Tyrosine 215 serves as a coordination point for shikimate. An NADP(+)-binding site is contributed by glycine 237.

This sequence belongs to the shikimate dehydrogenase family. As to quaternary structure, homodimer.

The catalysed reaction is shikimate + NADP(+) = 3-dehydroshikimate + NADPH + H(+). It functions in the pathway metabolic intermediate biosynthesis; chorismate biosynthesis; chorismate from D-erythrose 4-phosphate and phosphoenolpyruvate: step 4/7. Functionally, involved in the biosynthesis of the chorismate, which leads to the biosynthesis of aromatic amino acids. Catalyzes the reversible NADPH linked reduction of 3-dehydroshikimate (DHSA) to yield shikimate (SA). The polypeptide is Shikimate dehydrogenase (NADP(+)) (Neisseria meningitidis serogroup C / serotype 2a (strain ATCC 700532 / DSM 15464 / FAM18)).